A 135-amino-acid polypeptide reads, in one-letter code: Large ribosomal subunit protein bL19 (135 aa).

It belongs to the bacterial ribosomal protein bL19 family.

In terms of biological role, this protein is located at the 30S-50S ribosomal subunit interface and may play a role in the structure and function of the aminoacyl-tRNA binding site. This Xanthomonas axonopodis pv. citri (strain 306) protein is Large ribosomal subunit protein bL19.